The chain runs to 206 residues: Small ribosomal subunit protein uS4 (206 aa).

The 61-residue stretch at 96–156 (NRLDNVTYRI…KNSKLQSRIK (61 aa)) folds into the S4 RNA-binding domain.

Belongs to the universal ribosomal protein uS4 family. As to quaternary structure, part of the 30S ribosomal subunit. Contacts protein S5. The interaction surface between S4 and S5 is involved in control of translational fidelity.

Its function is as follows. One of the primary rRNA binding proteins, it binds directly to 16S rRNA where it nucleates assembly of the body of the 30S subunit. With S5 and S12 plays an important role in translational accuracy. In Buchnera aphidicola subsp. Baizongia pistaciae (strain Bp), this protein is Small ribosomal subunit protein uS4.